A 308-amino-acid polypeptide reads, in one-letter code: Homoserine kinase (308 aa).

ATP is bound at residue 95–105; that stretch reads PQSRGLGSSAA.

It belongs to the GHMP kinase family. Homoserine kinase subfamily.

It is found in the cytoplasm. It carries out the reaction L-homoserine + ATP = O-phospho-L-homoserine + ADP + H(+). The protein operates within amino-acid biosynthesis; L-threonine biosynthesis; L-threonine from L-aspartate: step 4/5. Its function is as follows. Catalyzes the ATP-dependent phosphorylation of L-homoserine to L-homoserine phosphate. This chain is Homoserine kinase, found in Corynebacterium jeikeium (strain K411).